The following is a 215-amino-acid chain: RNA pyrophosphohydrolase (215 aa).

One can recognise a Nudix hydrolase domain in the interval 6–149 (GFRPNVGIIL…KRDVYQLALT (144 aa)). Residues 38–59 (GGIKYGETPMQAMYRELHEETG) carry the Nudix box motif.

The protein belongs to the Nudix hydrolase family. RppH subfamily. The cofactor is a divalent metal cation.

In terms of biological role, accelerates the degradation of transcripts by removing pyrophosphate from the 5'-end of triphosphorylated RNA, leading to a more labile monophosphorylated state that can stimulate subsequent ribonuclease cleavage. This Burkholderia multivorans (strain ATCC 17616 / 249) protein is RNA pyrophosphohydrolase.